A 354-amino-acid chain; its full sequence is Uroporphyrinogen decarboxylase (354 aa).

Substrate-binding positions include 25 to 29 (RQAGR), Phe-44, Asp-75, Tyr-152, Thr-207, and His-330.

Belongs to the uroporphyrinogen decarboxylase family. As to quaternary structure, homodimer.

It is found in the cytoplasm. The catalysed reaction is uroporphyrinogen III + 4 H(+) = coproporphyrinogen III + 4 CO2. It participates in porphyrin-containing compound metabolism; protoporphyrin-IX biosynthesis; coproporphyrinogen-III from 5-aminolevulinate: step 4/4. Its function is as follows. Catalyzes the decarboxylation of four acetate groups of uroporphyrinogen-III to yield coproporphyrinogen-III. This Xylella fastidiosa (strain Temecula1 / ATCC 700964) protein is Uroporphyrinogen decarboxylase.